Here is a 57-residue protein sequence, read N- to C-terminus: Small ribosomal subunit protein bS21 (57 aa).

The protein belongs to the bacterial ribosomal protein bS21 family.

The chain is Small ribosomal subunit protein bS21 from Geobacillus kaustophilus (strain HTA426).